The sequence spans 475 residues: Aspartyl/glutamyl-tRNA(Asn/Gln) amidotransferase subunit B (475 aa).

This sequence belongs to the GatB/GatE family. GatB subfamily. Heterotrimer of A, B and C subunits.

It carries out the reaction L-glutamyl-tRNA(Gln) + L-glutamine + ATP + H2O = L-glutaminyl-tRNA(Gln) + L-glutamate + ADP + phosphate + H(+). The catalysed reaction is L-aspartyl-tRNA(Asn) + L-glutamine + ATP + H2O = L-asparaginyl-tRNA(Asn) + L-glutamate + ADP + phosphate + 2 H(+). In terms of biological role, allows the formation of correctly charged Asn-tRNA(Asn) or Gln-tRNA(Gln) through the transamidation of misacylated Asp-tRNA(Asn) or Glu-tRNA(Gln) in organisms which lack either or both of asparaginyl-tRNA or glutaminyl-tRNA synthetases. The reaction takes place in the presence of glutamine and ATP through an activated phospho-Asp-tRNA(Asn) or phospho-Glu-tRNA(Gln). This Bacillus mycoides (strain KBAB4) (Bacillus weihenstephanensis) protein is Aspartyl/glutamyl-tRNA(Asn/Gln) amidotransferase subunit B.